Reading from the N-terminus, the 436-residue chain is Cyclin-dependent kinase 11B (436 aa).

A Nuclear localization signal motif is present at residues 25-30; that stretch reads VKKNRK. The tract at residues 30–44 is calmodulin-binding; it reads KKLVKGLHRAGPPPE. Residues 79–364 form the Protein kinase domain; the sequence is FQCLNRIEEG…AEDGLKHEYF (286 aa). Residues 85–93 and K108 each bind ATP; that span reads IEEGTYGVV. S123 is modified (phosphoserine; by CDK7). The residue at position 129 (T129) is a Phosphothreonine; by CDK7. The active-site Proton acceptor is D203. At S230 the chain carries Phosphoserine. At Y235 the chain carries Phosphotyrosine. T236 is modified (phosphothreonine). K282 is covalently cross-linked (Glycyl lysine isopeptide (Lys-Gly) (interchain with G-Cter in SUMO2)). The interval 383-406 is disordered; sequence SEQQCVKRGTSPKPPEGGLGYSQL. Phosphothreonine is present on T392. S393 is subject to Phosphoserine.

The protein belongs to the protein kinase superfamily. CMGC Ser/Thr protein kinase family. CDC2/CDKX subfamily. May interact PAK1 and RANBP9. p110C interacts with RNPS1. Interacts with CCND3. Interacts with CCNL1 and CCNL2. Forms complexes with pre-mRNA-splicing factors, including at least SRSF1, SRSF2 AND SRSF7/SLU7. It depends on Mg(2+) as a cofactor.

It is found in the cytoplasm. The protein resides in the nucleus membrane. It localises to the endomembrane system. The protein localises to the perinuclear region. It catalyses the reaction L-seryl-[protein] + ATP = O-phospho-L-seryl-[protein] + ADP + H(+). The enzyme catalyses L-threonyl-[protein] + ATP = O-phospho-L-threonyl-[protein] + ADP + H(+). Its function is as follows. Plays multiple roles in cell cycle progression, cytokinesis and apoptosis. Involved in pre-mRNA splicing in a kinase activity-dependent manner. May act as a negative regulator of normal cell cycle progression. In Rattus norvegicus (Rat), this protein is Cyclin-dependent kinase 11B (Cdk11b).